The following is a 935-amino-acid chain: Isoleucine--tRNA ligase (935 aa).

The 'HIGH' region signature appears at 58–68 (PYANGSIHVGH). Glu-558 is a binding site for L-isoleucyl-5'-AMP. The 'KMSKS' region signature appears at 599-603 (KMSKS). Residue Lys-602 coordinates ATP. Residues Cys-897, Cys-900, Cys-917, and Cys-920 each contribute to the Zn(2+) site.

It belongs to the class-I aminoacyl-tRNA synthetase family. IleS type 1 subfamily. As to quaternary structure, monomer. Requires Zn(2+) as cofactor.

The protein localises to the cytoplasm. It catalyses the reaction tRNA(Ile) + L-isoleucine + ATP = L-isoleucyl-tRNA(Ile) + AMP + diphosphate. Its function is as follows. Catalyzes the attachment of isoleucine to tRNA(Ile). As IleRS can inadvertently accommodate and process structurally similar amino acids such as valine, to avoid such errors it has two additional distinct tRNA(Ile)-dependent editing activities. One activity is designated as 'pretransfer' editing and involves the hydrolysis of activated Val-AMP. The other activity is designated 'posttransfer' editing and involves deacylation of mischarged Val-tRNA(Ile). This Francisella tularensis subsp. tularensis (strain SCHU S4 / Schu 4) protein is Isoleucine--tRNA ligase.